Reading from the N-terminus, the 392-residue chain is Formate-dependent phosphoribosylglycinamide formyltransferase (392 aa).

N(1)-(5-phospho-beta-D-ribosyl)glycinamide contacts are provided by residues 22–23 (EL) and Glu-82. Residues Arg-114, Lys-155, 160–165 (SSGKGQ), 195–198 (EGVV), and Glu-203 contribute to the ATP site. Positions 119 to 308 (RLAAEELGLP…EFALHVRAFL (190 aa)) constitute an ATP-grasp domain. The Mg(2+) site is built by Glu-267 and Glu-279. Residues Asp-286, Lys-355, and 362–363 (RR) each bind N(1)-(5-phospho-beta-D-ribosyl)glycinamide.

It belongs to the PurK/PurT family. As to quaternary structure, homodimer.

It carries out the reaction N(1)-(5-phospho-beta-D-ribosyl)glycinamide + formate + ATP = N(2)-formyl-N(1)-(5-phospho-beta-D-ribosyl)glycinamide + ADP + phosphate + H(+). It functions in the pathway purine metabolism; IMP biosynthesis via de novo pathway; N(2)-formyl-N(1)-(5-phospho-D-ribosyl)glycinamide from N(1)-(5-phospho-D-ribosyl)glycinamide (formate route): step 1/1. Involved in the de novo purine biosynthesis. Catalyzes the transfer of formate to 5-phospho-ribosyl-glycinamide (GAR), producing 5-phospho-ribosyl-N-formylglycinamide (FGAR). Formate is provided by PurU via hydrolysis of 10-formyl-tetrahydrofolate. The chain is Formate-dependent phosphoribosylglycinamide formyltransferase from Salmonella schwarzengrund (strain CVM19633).